We begin with the raw amino-acid sequence, 248 residues long: tRNA (guanine-N(1)-)-methyltransferase (248 aa).

S-adenosyl-L-methionine contacts are provided by residues G113 and 133–138 (IGDYVL).

Belongs to the RNA methyltransferase TrmD family. As to quaternary structure, homodimer.

The protein resides in the cytoplasm. The catalysed reaction is guanosine(37) in tRNA + S-adenosyl-L-methionine = N(1)-methylguanosine(37) in tRNA + S-adenosyl-L-homocysteine + H(+). In terms of biological role, specifically methylates guanosine-37 in various tRNAs. This Shewanella denitrificans (strain OS217 / ATCC BAA-1090 / DSM 15013) protein is tRNA (guanine-N(1)-)-methyltransferase.